The chain runs to 291 residues: Pituitary-specific positive transcription factor 1 (291 aa).

Residues 5–13 (PFTSTDTFI) carry the 9aaTAD motif. Positions 124–198 (MDSPEIRELE…ILSKWLEEAE (75 aa)) constitute a POU-specific domain. A DNA-binding region (homeobox) is located at residues 214–273 (KRKRRTTISIAAKDALERHFGEQNKPSSQEILRMAEELNLEKEVVRVWFCNRRQREKRVK).

The protein belongs to the POU transcription factor family. Class-1 subfamily. In terms of assembly, interacts with PITX1. Interacts with LHX3. Interacts with ELK1.

It localises to the nucleus. In terms of biological role, transcription factor involved in the specification of the lactotrope, somatotrope, and thyrotrope phenotypes in the developing anterior pituitary. Activates growth hormone and prolactin genes. Specifically binds to the consensus sequence 5'-TAAAT-3'. In Bos taurus (Bovine), this protein is Pituitary-specific positive transcription factor 1 (POU1F1).